Consider the following 158-residue polypeptide: uncharacterized protein (158 aa).

The FPG-type zinc finger occupies 109 to 143 (RVHARTGLPCPVCGDTVREVSFADKSFQYCPTCQT).

This is an uncharacterized protein from Mycobacterium tuberculosis (strain ATCC 25618 / H37Rv).